The primary structure comprises 1557 residues: Ras guanine nucleotide exchange factor K (1557 aa).

A compositionally biased stretch (pro residues) spans 1–16; that stretch reads MEPTINPPVNLPPPVP. Disordered regions lie at residues 1-121, 146-181, 195-238, 283-347, 558-619, and 881-937; these read MEPT…SYTV, VETL…KLSV, LYQQ…SPQL, SPLP…GLTP, NNNN…DELS, and TNNN…QVNH. Low complexity-rich tracts occupy residues 17 to 40, 52 to 63, 73 to 90, 102 to 114, 148 to 161, 195 to 207, and 222 to 236; these read SRSN…NNTN, SSPSSPSSPSPS, NNNN…NGNV, ISSP…HTSS, TLSS…KTTT, LYQQ…NPNS, and PPSS…STSP. Pro residues predominate over residues 283–310; that stretch reads SPLPPPPLTIPNKVPPLPMRLPPPPPPQ. 2 coiled-coil regions span residues 310–338 and 591–629; these read QQLD…SNST and NNNN…EEEL. Residues 311 to 333 are compositionally biased toward low complexity; sequence QLDQMYSNNNQQQQQQQQQQQNN. The span at 334-343 shows a compositional bias: polar residues; it reads ESNSTTTSEG. Low complexity-rich tracts occupy residues 558–610 and 881–928; these read NNNN…NNNN and TNNN…TPTT. Positions 1058-1177 constitute an N-terminal Ras-GEF domain; that stretch reads LNAEIDAATL…QIRNCILKRT (120 aa). The tract at residues 1254 to 1303 is disordered; it reads PSISQNTPSSPSLIPSSPRPITSSSSVSSSTLLKSPLSQQAKSRIPETKT. The segment covering 1261–1291 has biased composition (low complexity); sequence PSSPSLIPSSPRPITSSSSVSSSTLLKSPLS. The region spanning 1316-1549 is the Ras-GEF domain; sequence DDEEIARQLT…YHLSLLKEPR (234 aa).

Promotes the exchange of Ras-bound GDP by GTP. In Dictyostelium discoideum (Social amoeba), this protein is Ras guanine nucleotide exchange factor K (gefK).